The following is a 218-amino-acid chain: uncharacterized protein (218 aa).

2 helical membrane-spanning segments follow: residues 8–28 (LAVF…ATAG) and 158–178 (ILFY…FLLI).

The protein localises to the cell membrane. This is an uncharacterized protein from Mycoplasma genitalium (strain ATCC 33530 / DSM 19775 / NCTC 10195 / G37) (Mycoplasmoides genitalium).